The primary structure comprises 289 residues: Myoblast determination protein 1 homolog A (289 aa).

Residues 95–146 enclose the bHLH domain; sequence DRRKAATMRERRRLSKVNEAFETLKRYTSTNPNQRLPKVEILRNAIRYIESL. The segment at 165-212 is disordered; that stretch reads SGDSDASSPRSNCSDGMMDYNSPPCGSRRRNSYDSSFYSDSPNDSRLG. Polar residues-rich tracts occupy residues 168 to 178 and 197 to 208; these read SDASSPRSNCS and YDSSFYSDSPND.

As to quaternary structure, efficient DNA binding requires dimerization with another bHLH protein.

The protein resides in the nucleus. May act as a transcriptional activator that promotes transcription of muscle-specific target genes and plays a role in muscle differentiation. The sequence is that of Myoblast determination protein 1 homolog A (myod1-a) from Xenopus laevis (African clawed frog).